The following is a 477-amino-acid chain: Salivary plasminogen activator alpha 1 (477 aa).

The signal sequence occupies residues 1–36 (MVNTMKTKLLCVLLLCGAVFSLPRQETYRQLARGSR). In terms of domain architecture, Fibronectin type-I spans 40-82 (VACKDEITQMTYRRQESWLRPEVRSKRVEHCQCDRGQARCHTV). 14 disulfides stabilise this stretch: Cys42–Cys72, Cys70–Cys79, Cys87–Cys98, Cys92–Cys109, Cys111–Cys120, Cys128–Cys209, Cys149–Cys191, Cys180–Cys204, Cys214–Cys345, Cys257–Cys273, Cys265–Cys334, Cys359–Cys434, Cys391–Cys407, and Cys424–Cys452. The 39-residue stretch at 83–121 (PVNSCSEPRCFNGGTCWQAVYFSDFVCQCPAGYTGKRCE) folds into the EGF-like domain. The region spanning 128-209 (CYEGQGVTYR…TSESCSVPVC (82 aa)) is the Kringle domain. Residue Asn153 is glycosylated (N-linked (GlcNAc...) asparagine). Residues 226 to 476 (STGGLFTDIT…YLGWIRDNMH (251 aa)) form the Peptidase S1 domain. Active-site charge relay system residues include His272 and Asp321. Residue Asn398 is glycosylated (N-linked (GlcNAc...) asparagine). Ser428 serves as the catalytic Charge relay system.

It belongs to the peptidase S1 family. In terms of assembly, monomer.

The protein localises to the secreted. The catalysed reaction is Specific cleavage of Arg-|-Val bond in plasminogen to form plasmin.. With respect to regulation, activity toward plasminogen is stimulated in the presence of fibrin I. In terms of biological role, probably essential to support the feeding habits of this exclusively haematophagous animal. Potent thrombolytic agent. The sequence is that of Salivary plasminogen activator alpha 1 from Desmodus rotundus (Vampire bat).